The following is a 345-amino-acid chain: Phosphoribosylformylglycinamidine cyclo-ligase (345 aa).

This sequence belongs to the AIR synthase family.

It is found in the cytoplasm. The catalysed reaction is 2-formamido-N(1)-(5-O-phospho-beta-D-ribosyl)acetamidine + ATP = 5-amino-1-(5-phospho-beta-D-ribosyl)imidazole + ADP + phosphate + H(+). It functions in the pathway purine metabolism; IMP biosynthesis via de novo pathway; 5-amino-1-(5-phospho-D-ribosyl)imidazole from N(2)-formyl-N(1)-(5-phospho-D-ribosyl)glycinamide: step 2/2. The chain is Phosphoribosylformylglycinamidine cyclo-ligase from Myxococcus xanthus (strain DK1622).